The sequence spans 357 residues: UDP-N-acetylglucosamine--N-acetylmuramyl-(pentapeptide) pyrophosphoryl-undecaprenol N-acetylglucosamine transferase (357 aa).

UDP-N-acetyl-alpha-D-glucosamine contacts are provided by residues 10–12 (TGG), Asn124, Ser189, Ile244, and Gln289.

Belongs to the glycosyltransferase 28 family. MurG subfamily.

It localises to the cell membrane. The enzyme catalyses Mur2Ac(oyl-L-Ala-gamma-D-Glu-L-Lys-D-Ala-D-Ala)-di-trans,octa-cis-undecaprenyl diphosphate + UDP-N-acetyl-alpha-D-glucosamine = beta-D-GlcNAc-(1-&gt;4)-Mur2Ac(oyl-L-Ala-gamma-D-Glu-L-Lys-D-Ala-D-Ala)-di-trans,octa-cis-undecaprenyl diphosphate + UDP + H(+). The protein operates within cell wall biogenesis; peptidoglycan biosynthesis. Cell wall formation. Catalyzes the transfer of a GlcNAc subunit on undecaprenyl-pyrophosphoryl-MurNAc-pentapeptide (lipid intermediate I) to form undecaprenyl-pyrophosphoryl-MurNAc-(pentapeptide)GlcNAc (lipid intermediate II). In Lactococcus lactis subsp. lactis (strain IL1403) (Streptococcus lactis), this protein is UDP-N-acetylglucosamine--N-acetylmuramyl-(pentapeptide) pyrophosphoryl-undecaprenol N-acetylglucosamine transferase.